Here is a 179-residue protein sequence, read N- to C-terminus: 3-hydroxyanthranilate 3,4-dioxygenase (179 aa).

Arginine 47 is a binding site for O2. 3 residues coordinate Fe cation: histidine 51, glutamate 57, and histidine 96. Residue glutamate 57 coordinates substrate. Residues arginine 100 and glutamate 110 each contribute to the substrate site. Fe cation-binding residues include cysteine 125, cysteine 128, cysteine 162, and cysteine 165.

It belongs to the 3-HAO family. Fe(2+) serves as cofactor.

The catalysed reaction is 3-hydroxyanthranilate + O2 = (2Z,4Z)-2-amino-3-carboxymuconate 6-semialdehyde. It functions in the pathway cofactor biosynthesis; NAD(+) biosynthesis; quinolinate from L-kynurenine: step 3/3. Its function is as follows. Catalyzes the oxidative ring opening of 3-hydroxyanthranilate to 2-amino-3-carboxymuconate semialdehyde, which spontaneously cyclizes to quinolinate. The polypeptide is 3-hydroxyanthranilate 3,4-dioxygenase (Bacillus cereus (strain 03BB102)).